Reading from the N-terminus, the 353-residue chain is Photosystem II D2 protein (353 aa).

T2 carries the post-translational modification N-acetylthreonine. Residue T2 is modified to Phosphothreonine. Residues 41-61 form a helical membrane-spanning segment; sequence CAYFAVGGWFTGTTFVTSWYT. H118 serves as a coordination point for chlorophyll a. Residues 125-141 form a helical membrane-spanning segment; it reads GFMLRQFELARSVQLRP. Residues Q130 and N143 each contribute to the pheophytin a site. Residues 153-166 form a helical membrane-spanning segment; sequence VFVSVFLIYPLGQS. Position 198 (H198) interacts with chlorophyll a. The helical transmembrane segment at 208-228 threads the bilayer; sequence AALLCAIHGATVENTLFEDGD. 2 residues coordinate a plastoquinone: H215 and F262. H215 serves as a coordination point for Fe cation. H269 contacts Fe cation. Residues 279–295 form a helical membrane-spanning segment; that stretch reads GLWMSALGVVGLALNLR.

Belongs to the reaction center PufL/M/PsbA/D family. In terms of assembly, PSII is composed of 1 copy each of membrane proteins PsbA, PsbB, PsbC, PsbD, PsbE, PsbF, PsbH, PsbI, PsbJ, PsbK, PsbL, PsbM, PsbT, PsbX, PsbY, PsbZ, Psb30/Ycf12, at least 3 peripheral proteins of the oxygen-evolving complex and a large number of cofactors. It forms dimeric complexes. The D1/D2 heterodimer binds P680, chlorophylls that are the primary electron donor of PSII, and subsequent electron acceptors. It shares a non-heme iron and each subunit binds pheophytin, quinone, additional chlorophylls, carotenoids and lipids. There is also a Cl(-1) ion associated with D1 and D2, which is required for oxygen evolution. The PSII complex binds additional chlorophylls, carotenoids and specific lipids. is required as a cofactor.

Its subcellular location is the plastid. The protein resides in the chloroplast thylakoid membrane. The enzyme catalyses 2 a plastoquinone + 4 hnu + 2 H2O = 2 a plastoquinol + O2. Its function is as follows. Photosystem II (PSII) is a light-driven water:plastoquinone oxidoreductase that uses light energy to abstract electrons from H(2)O, generating O(2) and a proton gradient subsequently used for ATP formation. It consists of a core antenna complex that captures photons, and an electron transfer chain that converts photonic excitation into a charge separation. The D1/D2 (PsbA/PsbD) reaction center heterodimer binds P680, the primary electron donor of PSII as well as several subsequent electron acceptors. D2 is needed for assembly of a stable PSII complex. This Atropa belladonna (Belladonna) protein is Photosystem II D2 protein.